A 333-amino-acid polypeptide reads, in one-letter code: Flap endonuclease 1 (333 aa).

The tract at residues 1–99 (MGVAIRDILA…ETINERREHR (99 aa)) is N-domain. Aspartate 28, aspartate 81, glutamate 153, glutamate 155, aspartate 174, aspartate 176, and aspartate 235 together coordinate Mg(2+). The I-domain stretch occupies residues 117-255 (EAYKQASASA…KTALKIVRNG (139 aa)). Positions 325–333 (TQKTLDAWF) are interaction with PCNA.

It belongs to the XPG/RAD2 endonuclease family. FEN1 subfamily. In terms of assembly, interacts with PCNA. PCNA stimulates the nuclease activity without altering cleavage specificity. The cofactor is Mg(2+).

Structure-specific nuclease with 5'-flap endonuclease and 5'-3' exonuclease activities involved in DNA replication and repair. During DNA replication, cleaves the 5'-overhanging flap structure that is generated by displacement synthesis when DNA polymerase encounters the 5'-end of a downstream Okazaki fragment. Binds the unpaired 3'-DNA end and kinks the DNA to facilitate 5' cleavage specificity. Cleaves one nucleotide into the double-stranded DNA from the junction in flap DNA, leaving a nick for ligation. Also involved in the base excision repair (BER) pathway. Acts as a genome stabilization factor that prevents flaps from equilibrating into structures that lead to duplications and deletions. Also possesses 5'-3' exonuclease activity on nicked or gapped double-stranded DNA. In Methanoculleus marisnigri (strain ATCC 35101 / DSM 1498 / JR1), this protein is Flap endonuclease 1.